The primary structure comprises 529 residues: T-complex protein 1 subunit beta (529 aa).

It belongs to the TCP-1 chaperonin family. In terms of assembly, heterooligomeric complex of about 850 to 900 kDa that forms two stacked rings, 12 to 16 nm in diameter.

Its subcellular location is the cytoplasm. Its function is as follows. Molecular chaperone; assists the folding of proteins upon ATP hydrolysis. Known to play a role, in vitro, in the folding of actin and tubulin. This is T-complex protein 1 subunit beta (cct-2) from Caenorhabditis elegans.